Reading from the N-terminus, the 334-residue chain is E3 ubiquitin-protein ligase ATL4 (334 aa).

The tract at residues 1 to 20 (MESLINPSHGGGNYDSHSSS) is disordered. Residues 28 to 48 (VLVIILILLMTLLISVSICFL) traverse the membrane as a helical segment. An RING-type; atypical zinc finger spans residues 117–159 (CAVCLSKFEPEDQLRLLPLCCHAFHADCIDIWLVSNQTCPLCR).

Belongs to the RING-type zinc finger family. ATL subfamily.

The protein resides in the membrane. It catalyses the reaction S-ubiquitinyl-[E2 ubiquitin-conjugating enzyme]-L-cysteine + [acceptor protein]-L-lysine = [E2 ubiquitin-conjugating enzyme]-L-cysteine + N(6)-ubiquitinyl-[acceptor protein]-L-lysine.. It participates in protein modification; protein ubiquitination. Its function is as follows. E3 ubiquitin-protein ligase able to catalyze polyubiquitination with ubiquitin-conjugating enzyme E2 UBC8 in vitro. The protein is E3 ubiquitin-protein ligase ATL4 of Arabidopsis thaliana (Mouse-ear cress).